Reading from the N-terminus, the 482-residue chain is tRNA sulfurtransferase (482 aa).

In terms of domain architecture, THUMP spans glutamate 61–arginine 165. Residues leucine 183–isoleucine 184, lysine 265, glycine 287, and glutamine 296 each bind ATP. Cysteine 344 and cysteine 456 are disulfide-bonded. The region spanning phenylalanine 404–proline 482 is the Rhodanese domain. Cysteine 456 functions as the Cysteine persulfide intermediate in the catalytic mechanism.

This sequence belongs to the ThiI family.

It is found in the cytoplasm. It catalyses the reaction [ThiI sulfur-carrier protein]-S-sulfanyl-L-cysteine + a uridine in tRNA + 2 reduced [2Fe-2S]-[ferredoxin] + ATP + H(+) = [ThiI sulfur-carrier protein]-L-cysteine + a 4-thiouridine in tRNA + 2 oxidized [2Fe-2S]-[ferredoxin] + AMP + diphosphate. The catalysed reaction is [ThiS sulfur-carrier protein]-C-terminal Gly-Gly-AMP + S-sulfanyl-L-cysteinyl-[cysteine desulfurase] + AH2 = [ThiS sulfur-carrier protein]-C-terminal-Gly-aminoethanethioate + L-cysteinyl-[cysteine desulfurase] + A + AMP + 2 H(+). It functions in the pathway cofactor biosynthesis; thiamine diphosphate biosynthesis. Catalyzes the ATP-dependent transfer of a sulfur to tRNA to produce 4-thiouridine in position 8 of tRNAs, which functions as a near-UV photosensor. Also catalyzes the transfer of sulfur to the sulfur carrier protein ThiS, forming ThiS-thiocarboxylate. This is a step in the synthesis of thiazole, in the thiamine biosynthesis pathway. The sulfur is donated as persulfide by IscS. The sequence is that of tRNA sulfurtransferase from Pectobacterium atrosepticum (strain SCRI 1043 / ATCC BAA-672) (Erwinia carotovora subsp. atroseptica).